The chain runs to 1098 residues: Transcription elongation regulator 1 (1098 aa).

Positions 1-15 (MAERGGDGGESERFN) are enriched in basic and acidic residues. Residues 1–105 (MAERGGDGGE…RPPFMPPPMS (105 aa)) form a disordered region. A Phosphoserine modification is found at Ser11. Arg20 bears the Omega-N-methylarginine mark. An asymmetric dimethylarginine mark is found at Arg28, Arg30, Arg41, and Arg48. Residues 32–105 (PAPPPNAVMR…RPPFMPPPMS (74 aa)) are compositionally biased toward pro residues. Residues 131–164 (PPTEEIWVENKTPDGKVYYYNARTRESAWTKPDG) enclose the WW 1 domain. Positions 184-244 (QAQAQAQAQA…AQAQAQAQVQ (61 aa)) form a coiled coil. Positions 259-333 (STPTTSSPAP…PTATPVQTVP (75 aa)) are enriched in low complexity. The segment at 259 to 348 (STPTTSSPAP…TLPPAVPHSV (90 aa)) is disordered. Over residues 334–344 (QPHPQTLPPAV) the composition is skewed to pro residues. The region spanning 429-462 (ATAVSEWTEYKTADGKTYYYNNRTLESTWEKPQE) is the WW 2 domain. Basic and acidic residues-rich tracts occupy residues 469–481 (LEEK…KEPS) and 496–506 (EEPIKEIKEEP). The tract at residues 469–526 (LEEKIKEPIKEPSEEPLPMETEEEDPKEEPIKEIKEEPKEEEMTEEEKAAQKAKPVAT) is disordered. Glycyl lysine isopeptide (Lys-Gly) (interchain with G-Cter in SUMO2) cross-links involve residues Lys503 and Lys507. A WW 3 domain is found at 528–561 (PIPGTPWCVVWTGDERVFFYNPTTRLSMWDRPDD). Positions 606–655 (AIKEEQELMEEINEDEPVKAKKRKRDDNKDIDSEKEAAMEAEIKAARERA) form a coiled coil. Lys608 is covalently cross-linked (Glycyl lysine isopeptide (Lys-Gly) (interchain with G-Cter in SUMO2)). Residues 615–640 (EEINEDEPVKAKKRKRDDNKDIDSEK) form a disordered region. The short motif at 626–630 (KKRKR) is the Nuclear localization signal element. The segment covering 630–640 (RDDNKDIDSEK) has biased composition (basic and acidic residues). Ser638 is subject to Phosphoserine. FF domains lie at 659-712 (LEAR…YVKT), 725-779 (IMQA…FVAA), and 791-846 (RGEK…YIEK). Ser834 carries the phosphoserine modification. Positions 844-906 (IEKIAKNLDS…EEAIQNFKAL (63 aa)) form a coiled coil. The segment at 870–895 (REREREVQKARSEQTKEIDREREQHK) is disordered. FF domains lie at 896–952 (REEA…HIEA), 954–1010 (TKKK…YIRD), and 1012–1077 (YITA…YVDD). Phosphoserine is present on Ser933. The interval 1076–1098 (DDLDRRGPPPPPTASEPTRRSTK) is disordered.

Binds formin. Interacts (via the second WW domain) with TREX1 (via proline-rich region). Binds RNA polymerase II, HD and SF1. Detected in brain neurons.

The protein resides in the nucleus. Functionally, transcription factor that binds RNA polymerase II and inhibits the elongation of transcripts from target promoters. Regulates transcription elongation in a TATA box-dependent manner. Necessary for TAT-dependent activation of the human immunodeficiency virus type 1 (HIV-1) promoter. The sequence is that of Transcription elongation regulator 1 (TCERG1) from Homo sapiens (Human).